The sequence spans 88 residues: Small ribosomal subunit protein bS20 (88 aa).

Over residues Met1–Arg23 the composition is skewed to basic and acidic residues. Disordered stretches follow at residues Met1–Val28 and Pro69–Lys88. The segment covering Asn71–Lys81 has biased composition (basic residues).

The protein belongs to the bacterial ribosomal protein bS20 family.

Binds directly to 16S ribosomal RNA. The polypeptide is Small ribosomal subunit protein bS20 (Dehalococcoides mccartyi (strain ATCC BAA-2266 / KCTC 15142 / 195) (Dehalococcoides ethenogenes (strain 195))).